Here is a 407-residue protein sequence, read N- to C-terminus: Myeloid cell nuclear differentiation antigen (407 aa).

The Pyrin domain maps to 1–88; sequence MANEYKKILL…VNNLRKERSK (88 aa). Positions 122–211 are disordered; the sequence is LTSEVGERIP…TRRNVPQKDP (90 aa). The Nuclear localization signal signature appears at 131 to 137; it reads PVAQKRK. Positions 177-199 are enriched in low complexity; it reads HTSSSTPSNTSFAQNQQTQAQCQ. The HIN-200 domain occupies 196-394; that stretch reads AQCQVDTRRN…CGSHSFIKVI (199 aa).

Participates in a ternary complex with YY1 and the YY1 target DNA element. Binds nucleolin and nucleophosmin/NPM/B23.

It localises to the nucleus. The protein localises to the cytoplasm. In terms of biological role, may act as a transcriptional activator/repressor in the myeloid lineage. Plays a role in the granulocyte/monocyte cell-specific response to interferon. Stimulates the DNA binding of the transcriptional repressor protein YY1. The polypeptide is Myeloid cell nuclear differentiation antigen (MNDA) (Macaca fascicularis (Crab-eating macaque)).